We begin with the raw amino-acid sequence, 626 residues long: Chaperone protein DnaK (626 aa).

Thr-175 is modified (phosphothreonine; by autocatalysis). Disordered regions lie at residues 469-488 (DKGTGKEQSMTITGGSGLPK), 498-517 (AEAHEAEDKKRKEDAETRNQ), and 583-626 (AQQG…KDNK). Positions 498–516 (AEAHEAEDKKRKEDAETRN) are enriched in basic and acidic residues. Over residues 609 to 626 (SDDDVVDAEVVDDDKDNK) the composition is skewed to acidic residues.

This sequence belongs to the heat shock protein 70 family.

Acts as a chaperone. This Bifidobacterium adolescentis (strain ATCC 15703 / DSM 20083 / NCTC 11814 / E194a) protein is Chaperone protein DnaK.